The following is a 353-amino-acid chain: Divinyl chlorophyll a/b light-harvesting protein PcbG (353 aa).

6 helical membrane-spanning segments follow: residues 28–48 (FISS…ANTL), 64–84 (GLVV…NGVF), 90–110 (LLVV…GGML), 204–224 (IMGG…FHIL), 244–264 (FVLS…ALWC), and 308–328 (LTNV…FHGL).

It belongs to the PsbB/PsbC family. IsiA/Pcb subfamily. As to quaternary structure, the antenna complex consists of divinyl chlorophylls (a and b) and divinyl chlorophyll a/b binding proteins and binds more divinyl chlorophyll b than does the antenna complex from high-light-adapted Prochlorococcus. Also forms complexes with PSI, consisting of a PSI trimer with surrounded by a PcbG ring (probably with 18 subunits). Is the only subunit found in this ring under iron-replete conditions. The cofactor is divinyl chlorophyll a. It depends on divinyl chlorophyll b as a cofactor.

It is found in the cellular thylakoid membrane. Functionally, the antenna complex functions as a light receptor, it captures and delivers excitation energy to photosystems I. The Prochlorales pcb genes are not related to higher plant LHCs. This is Divinyl chlorophyll a/b light-harvesting protein PcbG (pcbG) from Prochlorococcus marinus (strain SARG / CCMP1375 / SS120).